Reading from the N-terminus, the 391-residue chain is UPF0229 protein CLH_2838 (391 aa).

Disordered regions lie at residues 1 to 23 (MAIF…DKRR) and 75 to 107 (VATG…GNEE). Positions 80–92 (GEEKRGDKIESGS) are enriched in basic and acidic residues.

Belongs to the UPF0229 family.

This chain is UPF0229 protein CLH_2838, found in Clostridium botulinum (strain Alaska E43 / Type E3).